Consider the following 64-residue polypeptide: Large ribosomal subunit protein bL35 (64 aa).

2 stretches are compositionally biased toward basic residues: residues 1–15 (MPKQ…KRFR) and 23–43 (VRQK…RTRR). Positions 1-64 (MPKQKSHSGA…AGRIKRLLAR (64 aa)) are disordered.

The protein belongs to the bacterial ribosomal protein bL35 family.

In Frankia alni (strain DSM 45986 / CECT 9034 / ACN14a), this protein is Large ribosomal subunit protein bL35.